A 211-amino-acid chain; its full sequence is MNKGLIGKKIGMTQIFADDGRRIPVTVVEAGPCVVIQKKTKEKDGYNAIQVGFDAKEAAKANSATVGHCKAAGSGAFSFFRELRVDNVDSYNVGDVLNADLFAAGDVIDVTGTSIGKGFQGVIKRWGFKGGRSSHGSRFHRAPGSIGCSATPSRVFKNKKMPGQLGNERVTVQRLKVVRVDAADNLILVGGAIPGSTNGLVFIKDSVKAKK.

It belongs to the universal ribosomal protein uL3 family. Part of the 50S ribosomal subunit. Forms a cluster with proteins L14 and L19.

In terms of biological role, one of the primary rRNA binding proteins, it binds directly near the 3'-end of the 23S rRNA, where it nucleates assembly of the 50S subunit. The protein is Large ribosomal subunit protein uL3 of Geotalea daltonii (strain DSM 22248 / JCM 15807 / FRC-32) (Geobacter daltonii).